The sequence spans 559 residues: NXPE family member 3 (559 aa).

The signal sequence occupies residues 1–30 (MWINFVKLRLFCCLLAVLMVVVLVVNVTQV). N-linked (GlcNAc...) asparagine glycosylation is found at N26, N237, and N346.

It belongs to the NXPE family.

The protein resides in the secreted. This is NXPE family member 3 (NXPE3) from Bos taurus (Bovine).